The chain runs to 905 residues: Tudor domain-containing protein 5 (905 aa).

HTH OST-type domains follow at residues 6–79 (LLAG…KAIG) and 128–204 (AKPA…RSAV). Residues 219–264 (MQSTSPKQRLAGFSPKASSLPERRPEVSLDPSSVSKPEPVKEEQSF) form a disordered region. The HTH OST-type 3 domain occupies 288 to 364 (VSQELKEKLR…ESHWMVVEFK (77 aa)). The interval 368–393 (TQPCEPELSPGDGTTSSPTGELQNPS) is disordered. Polar residues predominate over residues 379 to 393 (DGTTSSPTGELQNPS). The Tudor domain maps to 523-581 (YVRPGQVCCVAPRDMWFYRVVIHEVFSETEVKVYYVDYGDITKVERHSLRFLKACYADL). The disordered stretch occupies residues 694–728 (PDAEIDSQGNDSPSSCRTASNSESGETNLASIDVD). Over residues 700 to 723 (SQGNDSPSSCRTASNSESGETNLA) the composition is skewed to polar residues.

Belongs to the TDRD5 family.

It is found in the cytoplasm. Functionally, required during spermiogenesis to participate in the repression transposable elements and prevent their mobilization, which is essential for the germline integrity. Probably acts via the piRNA metabolic process, which mediates the repression of transposable elements during meiosis by forming complexes composed of piRNAs and Piwi proteins and govern the methylation and subsequent repression of transposons. In Danio rerio (Zebrafish), this protein is Tudor domain-containing protein 5 (tdrd5).